The chain runs to 103 residues: Large ribosomal subunit protein bL21 (103 aa).

This sequence belongs to the bacterial ribosomal protein bL21 family. Part of the 50S ribosomal subunit. Contacts protein L20.

In terms of biological role, this protein binds to 23S rRNA in the presence of protein L20. This is Large ribosomal subunit protein bL21 from Alcanivorax borkumensis (strain ATCC 700651 / DSM 11573 / NCIMB 13689 / SK2).